Here is a 136-residue protein sequence, read N- to C-terminus: Holo-[acyl-carrier-protein] synthase (136 aa).

Residues aspartate 8 and glutamate 57 each coordinate Mg(2+).

The protein belongs to the P-Pant transferase superfamily. AcpS family. The cofactor is Mg(2+).

The protein localises to the cytoplasm. It catalyses the reaction apo-[ACP] + CoA = holo-[ACP] + adenosine 3',5'-bisphosphate + H(+). Its function is as follows. Transfers the 4'-phosphopantetheine moiety from coenzyme A to a Ser of acyl-carrier-protein. This chain is Holo-[acyl-carrier-protein] synthase, found in Methylobacterium radiotolerans (strain ATCC 27329 / DSM 1819 / JCM 2831 / NBRC 15690 / NCIMB 10815 / 0-1).